Reading from the N-terminus, the 413-residue chain is Glucose-1-phosphate adenylyltransferase (413 aa).

Residues Tyr102, Gly167, 182–183 (EK), and Ser200 contribute to the alpha-D-glucose 1-phosphate site.

The protein belongs to the bacterial/plant glucose-1-phosphate adenylyltransferase family. As to quaternary structure, homotetramer.

The enzyme catalyses alpha-D-glucose 1-phosphate + ATP + H(+) = ADP-alpha-D-glucose + diphosphate. It functions in the pathway glycan biosynthesis; glycogen biosynthesis. In terms of biological role, involved in the biosynthesis of ADP-glucose, a building block required for the elongation reactions to produce glycogen. Catalyzes the reaction between ATP and alpha-D-glucose 1-phosphate (G1P) to produce pyrophosphate and ADP-Glc. This chain is Glucose-1-phosphate adenylyltransferase, found in Deinococcus geothermalis (strain DSM 11300 / CIP 105573 / AG-3a).